The primary structure comprises 757 residues: 5-methyltetrahydropteroyltriglutamate--homocysteine methyltransferase (757 aa).

5-methyltetrahydropteroyltri-L-glutamate is bound by residues K18 and N116. 437–439 contacts L-homocysteine; the sequence is IGS. Residues 437-439 and E490 each bind L-methionine; that span reads IGS. 5-methyltetrahydropteroyltri-L-glutamate-binding positions include 521 to 522 and W567; that span reads RC. Position 605 (D605) interacts with L-homocysteine. D605 serves as a coordination point for L-methionine. H647, C649, H658, D662, and E671 together coordinate Zn(2+). The Proton donor role is filled by H701. C733 serves as a coordination point for Zn(2+).

Belongs to the vitamin-B12 independent methionine synthase family. The cofactor is Zn(2+). Expressed in pollen (at protein level).

The catalysed reaction is 5-methyltetrahydropteroyltri-L-glutamate + L-homocysteine = tetrahydropteroyltri-L-glutamate + L-methionine. It functions in the pathway amino-acid biosynthesis; L-methionine biosynthesis via de novo pathway; L-methionine from L-homocysteine (MetE route): step 1/1. Catalyzes the transfer of a methyl group from 5-methyltetrahydrofolate to homocysteine resulting in methionine formation. This Kali turgidum (Prickly saltwort) protein is 5-methyltetrahydropteroyltriglutamate--homocysteine methyltransferase.